The primary structure comprises 116 residues: Large ribosomal subunit protein bL19 (116 aa).

The protein belongs to the bacterial ribosomal protein bL19 family.

Functionally, this protein is located at the 30S-50S ribosomal subunit interface and may play a role in the structure and function of the aminoacyl-tRNA binding site. In Pseudomonas fluorescens (strain Pf0-1), this protein is Large ribosomal subunit protein bL19.